A 138-amino-acid chain; its full sequence is Nucleoside diphosphate kinase (138 aa).

Residues lysine 9, phenylalanine 57, arginine 85, threonine 91, arginine 102, and asparagine 112 each contribute to the ATP site. Histidine 115 functions as the Pros-phosphohistidine intermediate in the catalytic mechanism.

This sequence belongs to the NDK family. In terms of assembly, homotetramer. It depends on Mg(2+) as a cofactor.

It localises to the cytoplasm. The catalysed reaction is a 2'-deoxyribonucleoside 5'-diphosphate + ATP = a 2'-deoxyribonucleoside 5'-triphosphate + ADP. It catalyses the reaction a ribonucleoside 5'-diphosphate + ATP = a ribonucleoside 5'-triphosphate + ADP. In terms of biological role, major role in the synthesis of nucleoside triphosphates other than ATP. The ATP gamma phosphate is transferred to the NDP beta phosphate via a ping-pong mechanism, using a phosphorylated active-site intermediate. This chain is Nucleoside diphosphate kinase, found in Lawsonia intracellularis (strain PHE/MN1-00).